A 302-amino-acid chain; its full sequence is Nucleoside kinase (302 aa).

Substrate is bound by residues D17, Q33, G43, and N47. Residue Q109 coordinates ATP. Residues 111–113 and Q163 contribute to the substrate site; that span reads TFF. ATP contacts are provided by residues N186 and 214 to 219; that span reads TKGSKG. Substrate is bound at residue D247. D247 (proton acceptor) is an active-site residue.

In terms of assembly, homodimer. Mg(2+) serves as cofactor. Mn(2+) is required as a cofactor.

The catalysed reaction is cytidine + ATP = CMP + ADP + H(+). It carries out the reaction guanosine + ATP = GMP + ADP + H(+). The enzyme catalyses inosine + ATP = IMP + ADP + H(+). Catalyzes the phosphorylation of a wide range of nucleosides to yield nucleoside monophosphates. Shows the highest activity for inosine, guanosine and cytidine, but very poor kinase activity with adenosine, thymidine, uridine and xanthosine. ATP is the best phosphate donor, but can also use ITP and GTP. Shows extremely low activity with fructose-6-phosphate. The protein is Nucleoside kinase of Methanocaldococcus jannaschii (strain ATCC 43067 / DSM 2661 / JAL-1 / JCM 10045 / NBRC 100440) (Methanococcus jannaschii).